The sequence spans 351 residues: S-adenosylmethionine:tRNA ribosyltransferase-isomerase (351 aa).

The protein belongs to the QueA family. As to quaternary structure, monomer.

It is found in the cytoplasm. It carries out the reaction 7-aminomethyl-7-carbaguanosine(34) in tRNA + S-adenosyl-L-methionine = epoxyqueuosine(34) in tRNA + adenine + L-methionine + 2 H(+). The protein operates within tRNA modification; tRNA-queuosine biosynthesis. In terms of biological role, transfers and isomerizes the ribose moiety from AdoMet to the 7-aminomethyl group of 7-deazaguanine (preQ1-tRNA) to give epoxyqueuosine (oQ-tRNA). The chain is S-adenosylmethionine:tRNA ribosyltransferase-isomerase from Idiomarina loihiensis (strain ATCC BAA-735 / DSM 15497 / L2-TR).